The chain runs to 873 residues: Leucine--tRNA ligase (873 aa).

Residues 42-52 carry the 'HIGH' region motif; it reads PYPSGKLHMGH. Residues 628-632 carry the 'KMSKS' region motif; sequence KMSKS. K631 lines the ATP pocket.

This sequence belongs to the class-I aminoacyl-tRNA synthetase family.

The protein resides in the cytoplasm. It catalyses the reaction tRNA(Leu) + L-leucine + ATP = L-leucyl-tRNA(Leu) + AMP + diphosphate. This is Leucine--tRNA ligase from Azoarcus sp. (strain BH72).